An 88-amino-acid polypeptide reads, in one-letter code: ATP synthase epsilon chain (88 aa).

The protein belongs to the ATPase epsilon chain family. In terms of assembly, F-type ATPases have 2 components, CF(1) - the catalytic core - and CF(0) - the membrane proton channel. CF(1) has five subunits: alpha(3), beta(3), gamma(1), delta(1), epsilon(1). CF(0) has three main subunits: a, b and c.

It is found in the cell inner membrane. Produces ATP from ADP in the presence of a proton gradient across the membrane. The sequence is that of ATP synthase epsilon chain (atpC) from Chlorobaculum tepidum (strain ATCC 49652 / DSM 12025 / NBRC 103806 / TLS) (Chlorobium tepidum).